The chain runs to 434 residues: N-lysine methyltransferase SMYD2-B (434 aa).

The SET domain maps to 8–242; the sequence is PGIEQFASPG…PGQEIYTSYI (235 aa). 18–20 contacts S-adenosyl-L-methionine; that stretch reads KGR. Zn(2+)-binding residues include Cys53, Cys56, Cys66, Cys69, Cys75, Cys79, His87, and Cys91. The segment at 53–91 adopts an MYND-type zinc-finger fold; the sequence is CEQCFTRKKGLAKCGKCKKAFYCNANCQKKNWPMHKLEC. S-adenosyl-L-methionine-binding positions include His138, 207–208, and 259–261; these read NH and YYF.

It belongs to the class V-like SAM-binding methyltransferase superfamily.

The protein localises to the cytoplasm. The protein resides in the cytosol. It is found in the nucleus. The catalysed reaction is L-lysyl(4)-[histone H3] + 3 S-adenosyl-L-methionine = N(6),N(6),N(6)-trimethyl-L-lysyl(4)-[histone H3] + 3 S-adenosyl-L-homocysteine + 3 H(+). It catalyses the reaction L-lysyl-[protein] + S-adenosyl-L-methionine = N(6)-methyl-L-lysyl-[protein] + S-adenosyl-L-homocysteine + H(+). In terms of biological role, protein-lysine N-methyltransferase that methylates both histones and non-histone proteins, including p53/TP53 and RB1. Specifically trimethylates histone H3 'Lys-4' (H3K4me3) in vivo. The activity requires interaction with HSP90alpha. Shows even higher methyltransferase activity on p53/TP53. Monomethylates 'Lys-370' of p53/TP53, leading to decreased DNA-binding activity and subsequent transcriptional regulation activity of p53/TP53. Monomethylates RB1 at 'Lys-860'. The sequence is that of N-lysine methyltransferase SMYD2-B (smyd2b) from Danio rerio (Zebrafish).